A 317-amino-acid polypeptide reads, in one-letter code: MTVMSHLRVSLQVSSCTLLWRRFRVPRLVPLRSCSLYTCTYRTRNRALPPLWENLDLVPAGDRQSPINIRWRDSVYDPGLKPLTISYDPATCLHIWNNGYSFLVEFEDTTDKSVIEGGPLEHNYRLKQFHFHWGAIDAWGSEHTVDSKCYPAELHLVHWNAVKFESFEDAALEENGLAVIGVFLKLGKHHKELQKLVDTLPSIKHKDTLVKFGSFDPSCLMPTCPDYWTYSGSLTTPPLSESVTWIIKKQPVEVDHDQLEQFRTLLFTSEGEKEKRMVDNFRPLQPLMNRTVRSSFRHDYVLNIQVKPEPTASEVSP.

Residues 1–33 (MTVMSHLRVSLQVSSCTLLWRRFRVPRLVPLRS) constitute a mitochondrion transit peptide. One can recognise an Alpha-carbonic anhydrase domain in the interval 37 to 296 (YTCTYRTRNR…LMNRTVRSSF (260 aa)). Residues His-130, His-132, and His-155 each coordinate Zn(2+). 235-236 (TT) serves as a coordination point for substrate.

Belongs to the alpha-carbonic anhydrase family. Zn(2+) is required as a cofactor.

The protein localises to the mitochondrion. It carries out the reaction hydrogencarbonate + H(+) = CO2 + H2O. Functionally, mitochondrial carbonic anhydrase that catalyzes the reversible conversion of carbon dioxide to bicarbonate/HCO3. The chain is Carbonic anhydrase 5B, mitochondrial (Ca5b) from Rattus norvegicus (Rat).